Consider the following 417-residue polypeptide: UDP-N-acetylmuramoylalanine--D-glutamate ligase (417 aa).

Position 104–110 (104–110 (GSNGKST)) interacts with ATP.

It belongs to the MurCDEF family.

The protein localises to the cytoplasm. It catalyses the reaction UDP-N-acetyl-alpha-D-muramoyl-L-alanine + D-glutamate + ATP = UDP-N-acetyl-alpha-D-muramoyl-L-alanyl-D-glutamate + ADP + phosphate + H(+). The protein operates within cell wall biogenesis; peptidoglycan biosynthesis. Cell wall formation. Catalyzes the addition of glutamate to the nucleotide precursor UDP-N-acetylmuramoyl-L-alanine (UMA). This Francisella tularensis subsp. novicida (strain U112) protein is UDP-N-acetylmuramoylalanine--D-glutamate ligase.